A 185-amino-acid chain; its full sequence is Ribosome-recycling factor (185 aa).

It belongs to the RRF family.

It is found in the cytoplasm. Its function is as follows. Responsible for the release of ribosomes from messenger RNA at the termination of protein biosynthesis. May increase the efficiency of translation by recycling ribosomes from one round of translation to another. In Treponema denticola (strain ATCC 35405 / DSM 14222 / CIP 103919 / JCM 8153 / KCTC 15104), this protein is Ribosome-recycling factor.